We begin with the raw amino-acid sequence, 240 residues long: Mannosyl-D-glycerate transport/metabolism system repressor MngR (240 aa).

The 69-residue stretch at 4–72 (KPLYRQIADR…QGSGTYVKEE (69 aa)) folds into the HTH gntR-type domain. The segment at residues 32-51 (ESALQTEFGVSRVTVRQALR) is a DNA-binding region (H-T-H motif).

In terms of biological role, represses mngA and mngB. Regulates its own expression. This Escherichia coli (strain K12) protein is Mannosyl-D-glycerate transport/metabolism system repressor MngR (mngR).